The primary structure comprises 283 residues: Polyamine aminopropyltransferase (283 aa).

The 237-residue stretch at 5 to 241 (NNWYIEHFER…GWWSVTLARK (237 aa)) folds into the PABS domain. Q35 is a binding site for S-methyl-5'-thioadenosine. 2 residues coordinate spermidine: H66 and D90. S-methyl-5'-thioadenosine is bound by residues D110 and 141–142 (DG). The active-site Proton acceptor is D160. Spermidine is bound at residue 160 to 163 (DSTD). P167 serves as a coordination point for S-methyl-5'-thioadenosine.

It belongs to the spermidine/spermine synthase family. In terms of assembly, homodimer or homotetramer.

The protein localises to the cytoplasm. It catalyses the reaction S-adenosyl 3-(methylsulfanyl)propylamine + putrescine = S-methyl-5'-thioadenosine + spermidine + H(+). Its pathway is amine and polyamine biosynthesis; spermidine biosynthesis; spermidine from putrescine: step 1/1. Its function is as follows. Catalyzes the irreversible transfer of a propylamine group from the amino donor S-adenosylmethioninamine (decarboxy-AdoMet) to putrescine (1,4-diaminobutane) to yield spermidine. The sequence is that of Polyamine aminopropyltransferase from Stenotrophomonas maltophilia (strain R551-3).